A 97-amino-acid polypeptide reads, in one-letter code: uncharacterized protein (97 aa).

May have a regulatory function. This is an uncharacterized protein from Synechocystis sp. (strain ATCC 27184 / PCC 6803 / Kazusa).